The chain runs to 645 residues: Sodium-dependent phosphate transporter 2 (645 aa).

Topologically, residues 1 to 5 (MAMDE) are extracellular. A helical transmembrane segment spans residues 6-26 (YLWMVILGFIIAFILAFSVGA). Residues 27-46 (NDVANSFGTAVGSGVVTLRQ) lie on the Cytoplasmic side of the membrane. Residues 47–67 (ACILASIFETTGSVLLGAKVG) traverse the membrane as a helical segment. Residues 68-86 (ETIRKGIIDVNLYNNTVET) lie on the Extracellular side of the membrane. N-linked (GlcNAc...) asparagine glycosylation is present at Asn-81. The helical transmembrane segment at 87 to 107 (LMAGEVSAMVGSAVWQLIASF) threads the bilayer. Topologically, residues 108-109 (LR) are cytoplasmic. Residues 110–130 (FPISGTHCIVGATIGFSLVAI) form a helical membrane-spanning segment. Residues 131-142 (GTQGVQWMELVK) are Extracellular-facing. A helical transmembrane segment spans residues 143–163 (IVASWFISPLLSGFMSGVLFV). At 164 to 190 (LIRMFILKKEDPVPNGLRALPVFYAAT) the chain is on the cytoplasmic side. Residues 191 to 211 (IAINVFSIMYTGAPVMGLVLP) form a helical membrane-spanning segment. Topologically, residues 212–213 (MW) are extracellular. A helical membrane pass occupies residues 214 to 234 (AIALISFGVALLFALFVWLFV). Over 235–475 (CPWMRRKITG…EEKEEKDSPE (241 aa)) the chain is Cytoplasmic. Phosphoserine occurs at positions 253, 256, 259, 268, 316, and 379. The disordered stretch occupies residues 275–320 (PGAKAHDDSTVPLTGSAADPSGTSESMSGGHHPRAPYGRALSMTHG). A disordered region spans residues 448 to 471 (RLAPPLAEPEPPRDDPADEEKEEK). The helical transmembrane segment at 476 to 496 (VHLLFHFLQVLTACFGSFAHG) threads the bilayer. Residues 497–523 (GNDVSNAIGPLVALWLIYEQGAVLQEA) are Extracellular-facing. Residues 524–544 (ATPVWLLFYGGVGICTGLWVW) form a helical membrane-spanning segment. Residues 545–564 (GRRVIQTMGKDLTPITPSSG) are Cytoplasmic-facing. Residues 565-579 (FTIELASAFTVVIAS) traverse the membrane as a helical segment. Residues 580–586 (NIGLPVS) lie on the Extracellular side of the membrane. Residues 587–602 (TTHCKVGSVVAVGWIR) form a helical membrane-spanning segment. The Cytoplasmic portion of the chain corresponds to 603 to 614 (SRKAVDWRLFRN). A helical membrane pass occupies residues 615-635 (IFVAWFVTVPVAGLFSAAIMA). Topologically, residues 636 to 645 (LLIHGILPFV) are extracellular.

This sequence belongs to the inorganic phosphate transporter (PiT) (TC 2.A.20) family. As to quaternary structure, homodimer.

The protein resides in the cell membrane. Its subcellular location is the apical cell membrane. It carries out the reaction 2 Na(+)(out) + phosphate(out) = 2 Na(+)(in) + phosphate(in). Functionally, sodium-phosphate symporter which preferentially transports the monovalent form of phosphate with a stoichiometry of two sodium ions per phosphate ion. Plays a critical role in the determination of bone quality and strength by providing phosphate for bone mineralization. Required to maintain normal cerebrospinal fluid phosphate levels. Mediates phosphate-induced calcification of vascular smooth muscle cells (VCMCs) and can functionally compensate for loss of SLC20A1 in VCMCs. The polypeptide is Sodium-dependent phosphate transporter 2 (SLC20A2) (Bos taurus (Bovine)).